Reading from the N-terminus, the 411-residue chain is Endo-1,4-beta-xylanase A (411 aa).

The N-terminal stretch at 1 to 33 is a signal peptide; it reads MKKFKIRKLMARVLALALVFSTFFMVSKVDANA. In terms of domain architecture, GH10 spans 34-382; sequence ASYNLMETYG…KPAYDEVVKA (349 aa). E201 serves as the catalytic Proton donor. E311 functions as the Nucleophile in the catalytic mechanism. Residues 387–411 form a disordered region; it reads FGNPGSFTPQPTITPQPTPTPSGQT. The segment covering 398-411 has biased composition (pro residues); that stretch reads TITPQPTPTPSGQT.

It belongs to the glycosyl hydrolase 10 (cellulase F) family.

The catalysed reaction is Endohydrolysis of (1-&gt;4)-beta-D-xylosidic linkages in xylans.. Its pathway is glycan degradation; xylan degradation. Functionally, b.fibrisolvens is located in the rumen of ruminant animals, where it contributes to the animal's digestion of plant material by hydrolyzing hemicellulose with its xylanases. The chain is Endo-1,4-beta-xylanase A (xynA) from Butyrivibrio fibrisolvens.